The following is a 940-amino-acid chain: Serine/threonine-protein phosphatase 1 regulatory subunit 10 (940 aa).

The interval 1–348 (MGSGPIDPKE…EPAPPSEAMD (348 aa)) is interaction with TOX4. One can recognise a TFIIS N-terminal domain in the interval 73–147 (KLLNNWLTYS…SDWMAVIRSQ (75 aa)). Disordered stretches follow at residues 147 to 211 (QSST…FRST), 247 to 270 (SNVAAPGDATPPAEKKYKPLNTTP), 304 to 400 (KIKK…KSVT), and 533 to 905 (YVET…HGGD). 2 stretches are compositionally biased toward basic and acidic residues: residues 153-166 (AEKDKKKRKDEGKS) and 174-196 (PLTEVKAETRAEEAPEKKREKPK). Residue Lys-179 forms a Glycyl lysine isopeptide (Lys-Gly) (interchain with G-Cter in SUMO2) linkage. Phosphothreonine is present on Thr-256. A Glycyl lysine isopeptide (Lys-Gly) (interchain with G-Cter in SUMO2) cross-link involves residue Lys-262. Ser-313 carries the post-translational modification Phosphoserine. Residues 325–336 (KTSTEPSTAKPS) are compositionally biased toward low complexity. The tract at residues 357–433 (PPVEVPELMD…NKIKDFGEAA (77 aa)) is necessary for interaction with PPP1CA. A Phosphoserine modification is found at Ser-382. The tract at residues 393 to 408 (GRKRKSVTWPEEGKLR) is necessary for interaction with PPP1CC. The PP1-binding motif signature appears at 394–423 (RKRKSVTWPEEGKLREYFYFELDETERVNV). The residue at position 398 (Ser-398) is a Phosphoserine; by PKA. An interaction with WDR82 region spans residues 418 to 619 (TERVNVNKIK…IKQMLVPHGL (202 aa)). Composition is skewed to gly residues over residues 540-551 (GGSGGSPDGAGG) and 565-579 (MGAGKGPQGPGGGGI). Ser-545 carries the phosphoserine modification. A compositionally biased stretch (polar residues) spans 583–595 (EILTSIMGSPNSH). At Ser-591 the chain carries Phosphoserine. A compositionally biased stretch (basic and acidic residues) spans 596–611 (PSEELLKQPDYSDKIK). The segment covering 644 to 655 (PPGPGGPMPGPH) has biased composition (pro residues). At Arg-665 the chain carries Omega-N-methylarginine. Residues 676-690 (GDPFWDGPGDPMRGG) are compositionally biased toward low complexity. Arg-693 is modified (omega-N-methylarginine). The segment covering 714–723 (EPPPPPPPPF) has biased composition (pro residues). Gly residues-rich tracts occupy residues 726–764 (ARGGRSGGGPPNGRGGPGGGMVGGGGHRPHEGPGGGMGN) and 790–845 (SSMG…GSGG). Position 739 is an omega-N-methylarginine (Arg-739). Basic and acidic residues-rich tracts occupy residues 862-886 (PHDVPGHRGHDHRGPPHEHRGHDGP) and 894-903 (RGHDGGHSHG). The C3H1-type zinc-finger motif lies at 906–934 (MSNRPVCRHFMMKGNCRYENNCAFYHPGV).

Component of the PNUTS-PP1 complex (also named PTW/PP1 complex), composed of PPP1R10/PNUTS, TOX4, WDR82, and PPP1CA (or PPP1CB or PPP1CC). In terms of processing, phosphorylated on Ser-398 by PKA within the region necessary for interaction with PPP1CA.

It localises to the nucleus. Its subcellular location is the chromosome. Its function is as follows. Substrate-recognition component of the PNUTS-PP1 protein phosphatase complex, a protein phosphatase 1 (PP1) complex that promotes RNA polymerase II transcription pause-release, allowing transcription elongation. Promoter-proximal pausing by RNA polymerase II is a transcription halt following transcription initiation but prior to elongation, which acts as a checkpoint to control that transcripts are favorably configured for transcriptional elongation. The PNUTS-PP1 complex mediates the release of RNA polymerase II from promoter-proximal region of genes by catalyzing dephosphorylation of proteins involved in transcription, such as AFF4, CDK9, MEPCE, INTS12, NCBP1, POLR2M/GDOWN1 and SUPT6H. The PNUTS-PP1 complex also regulates RNA polymerase II transcription termination by mediating dephosphorylation of SUPT5H in termination zones downstream of poly(A) sites, thereby promoting deceleration of RNA polymerase II transcription. PNUTS-PP1 complex is also involved in the response to replication stress by mediating dephosphorylation of POLR2A at 'Ser-5' of the CTD, promoting RNA polymerase II degradation. The PNUTS-PP1 complex also plays a role in the control of chromatin structure and cell cycle progression during the transition from mitosis into interphase. PNUTS-PP1 complex mediates dephosphorylation of MYC, promoting MYC stability by preventing MYC ubiquitination by the SCF(FBXW7) complex. In addition to acts as a substrate-recognition component, PPP1R10/PNUTS also acts as a nuclear targeting subunit for the PNUTS-PP1 complex. In some context, PPP1R10/PNUTS also acts as an inhibitor of protein phosphatase 1 (PP1) activity by preventing access to substrates, such as RB. The polypeptide is Serine/threonine-protein phosphatase 1 regulatory subunit 10 (PPP1R10) (Macaca mulatta (Rhesus macaque)).